The chain runs to 523 residues: UDP-glucuronosyltransferase 3A1 (523 aa).

The first 22 residues, Met1–Ala22, serve as a signal peptide directing secretion. The Extracellular segment spans residues Ala23–Asp487. N-linked (GlcNAc...) asparagine glycosylation occurs at Asn70. Residues Val488–Val508 traverse the membrane as a helical segment. The Cytoplasmic portion of the chain corresponds to Ala509–Ala523.

This sequence belongs to the UDP-glycosyltransferase family. As to expression, highly expressed in kidney, while it is expressed at low levels in liver. Not detected in other tissues examined.

The protein localises to the membrane. It carries out the reaction glucuronate acceptor + UDP-alpha-D-glucuronate = acceptor beta-D-glucuronoside + UDP + H(+). Its function is as follows. UDP-glucuronosyltransferases catalyze phase II biotransformation reactions in which lipophilic substrates are conjugated with glucuronic acid to increase water solubility and enhance excretion. They are of major importance in the conjugation and subsequent elimination of potentially toxic xenobiotics and endogenous compounds. The polypeptide is UDP-glucuronosyltransferase 3A1 (Ugt3a1) (Mus musculus (Mouse)).